The primary structure comprises 277 residues: 4-hydroxy-3-methylbut-2-enyl diphosphate reductase (277 aa).

Residue cysteine 12 participates in [4Fe-4S] cluster binding. Residues histidine 36 and histidine 70 each contribute to the (2E)-4-hydroxy-3-methylbut-2-enyl diphosphate site. 2 residues coordinate dimethylallyl diphosphate: histidine 36 and histidine 70. Isopentenyl diphosphate is bound by residues histidine 36 and histidine 70. Cysteine 92 serves as a coordination point for [4Fe-4S] cluster. Residue histidine 120 participates in (2E)-4-hydroxy-3-methylbut-2-enyl diphosphate binding. Histidine 120 contacts dimethylallyl diphosphate. Histidine 120 lines the isopentenyl diphosphate pocket. The active-site Proton donor is the glutamate 122. Threonine 158 serves as a coordination point for (2E)-4-hydroxy-3-methylbut-2-enyl diphosphate. Cysteine 186 serves as a coordination point for [4Fe-4S] cluster. 3 residues coordinate (2E)-4-hydroxy-3-methylbut-2-enyl diphosphate: serine 214, asparagine 216, and serine 258. The dimethylallyl diphosphate site is built by serine 214, asparagine 216, and serine 258. Isopentenyl diphosphate-binding residues include serine 214, asparagine 216, and serine 258.

Belongs to the IspH family. Requires [4Fe-4S] cluster as cofactor.

The catalysed reaction is isopentenyl diphosphate + 2 oxidized [2Fe-2S]-[ferredoxin] + H2O = (2E)-4-hydroxy-3-methylbut-2-enyl diphosphate + 2 reduced [2Fe-2S]-[ferredoxin] + 2 H(+). It carries out the reaction dimethylallyl diphosphate + 2 oxidized [2Fe-2S]-[ferredoxin] + H2O = (2E)-4-hydroxy-3-methylbut-2-enyl diphosphate + 2 reduced [2Fe-2S]-[ferredoxin] + 2 H(+). It functions in the pathway isoprenoid biosynthesis; dimethylallyl diphosphate biosynthesis; dimethylallyl diphosphate from (2E)-4-hydroxy-3-methylbutenyl diphosphate: step 1/1. Its pathway is isoprenoid biosynthesis; isopentenyl diphosphate biosynthesis via DXP pathway; isopentenyl diphosphate from 1-deoxy-D-xylulose 5-phosphate: step 6/6. Catalyzes the conversion of 1-hydroxy-2-methyl-2-(E)-butenyl 4-diphosphate (HMBPP) into a mixture of isopentenyl diphosphate (IPP) and dimethylallyl diphosphate (DMAPP). Acts in the terminal step of the DOXP/MEP pathway for isoprenoid precursor biosynthesis. This chain is 4-hydroxy-3-methylbut-2-enyl diphosphate reductase, found in Campylobacter jejuni subsp. jejuni serotype O:2 (strain ATCC 700819 / NCTC 11168).